The primary structure comprises 107 residues: Probable 4-amino-4-deoxy-L-arabinose-phosphoundecaprenol flippase subunit ArnE (107 aa).

The EamA domain maps to 31–105 (RVWGWLALSL…IIVGIILLGG (75 aa)). 3 helical membrane-spanning segments follow: residues 34–54 (GWLALSLVLLGCAMLLWLFVL), 57–77 (VPVSVAYPMLSLNFIFITLAA), and 85–105 (IALRHGVGVLLIIVGIILLGG).

Belongs to the ArnE family. As to quaternary structure, heterodimer of ArnE and ArnF.

It is found in the cell inner membrane. Its pathway is bacterial outer membrane biogenesis; lipopolysaccharide biosynthesis. Functionally, translocates 4-amino-4-deoxy-L-arabinose-phosphoundecaprenol (alpha-L-Ara4N-phosphoundecaprenol) from the cytoplasmic to the periplasmic side of the inner membrane. The sequence is that of Probable 4-amino-4-deoxy-L-arabinose-phosphoundecaprenol flippase subunit ArnE from Enterobacter sp. (strain 638).